The primary structure comprises 157 residues: 2-C-methyl-D-erythritol 2,4-cyclodiphosphate synthase (157 aa).

2 residues coordinate a divalent metal cation: Asp8 and His10. 4-CDP-2-C-methyl-D-erythritol 2-phosphate is bound by residues 8–10 (DVH) and 34–35 (HS). His42 provides a ligand contact to a divalent metal cation. Residues 56 to 58 (DIG), 61 to 65 (FPDTD), 100 to 106 (AQAPKMA), 132 to 135 (TTTE), Phe139, and Arg142 contribute to the 4-CDP-2-C-methyl-D-erythritol 2-phosphate site.

Belongs to the IspF family. As to quaternary structure, homotrimer. It depends on a divalent metal cation as a cofactor.

The catalysed reaction is 4-CDP-2-C-methyl-D-erythritol 2-phosphate = 2-C-methyl-D-erythritol 2,4-cyclic diphosphate + CMP. Its pathway is isoprenoid biosynthesis; isopentenyl diphosphate biosynthesis via DXP pathway; isopentenyl diphosphate from 1-deoxy-D-xylulose 5-phosphate: step 4/6. In terms of biological role, involved in the biosynthesis of isopentenyl diphosphate (IPP) and dimethylallyl diphosphate (DMAPP), two major building blocks of isoprenoid compounds. Catalyzes the conversion of 4-diphosphocytidyl-2-C-methyl-D-erythritol 2-phosphate (CDP-ME2P) to 2-C-methyl-D-erythritol 2,4-cyclodiphosphate (ME-CPP) with a corresponding release of cytidine 5-monophosphate (CMP). The polypeptide is 2-C-methyl-D-erythritol 2,4-cyclodiphosphate synthase (Serratia proteamaculans (strain 568)).